We begin with the raw amino-acid sequence, 563 residues long: Arginine--tRNA ligase (563 aa).

The 'HIGH' region motif lies at 123–133; it reads PNIAKDMHVGH.

The protein belongs to the class-I aminoacyl-tRNA synthetase family. Monomer.

The protein resides in the cytoplasm. It carries out the reaction tRNA(Arg) + L-arginine + ATP = L-arginyl-tRNA(Arg) + AMP + diphosphate. This is Arginine--tRNA ligase (argS) from Chlamydia trachomatis serovar D (strain ATCC VR-885 / DSM 19411 / UW-3/Cx).